Here is a 226-residue protein sequence, read N- to C-terminus: Cytidylate kinase (226 aa).

10–18 (GPASSGKST) lines the ATP pocket.

Its subcellular location is the cytoplasm. It carries out the reaction CMP + ATP = CDP + ADP. It catalyses the reaction dCMP + ATP = dCDP + ADP. The sequence is that of Cytidylate kinase from Streptococcus pyogenes serotype M6 (strain ATCC BAA-946 / MGAS10394).